Consider the following 61-residue polypeptide: Photosystem II reaction center protein K (61 aa).

Positions 1–24 are excised as a propeptide; it reads MLNIFNLICICFNSALFSSTFLVA. Residues 40–60 traverse the membrane as a helical segment; it reads MPVIPLFFLLLAFVWQAAVSF.

This sequence belongs to the PsbK family. PSII is composed of 1 copy each of membrane proteins PsbA, PsbB, PsbC, PsbD, PsbE, PsbF, PsbH, PsbI, PsbJ, PsbK, PsbL, PsbM, PsbT, PsbX, PsbY, PsbZ, Psb30/Ycf12, at least 3 peripheral proteins of the oxygen-evolving complex and a large number of cofactors. It forms dimeric complexes.

The protein resides in the plastid. The protein localises to the chloroplast thylakoid membrane. Functionally, one of the components of the core complex of photosystem II (PSII). PSII is a light-driven water:plastoquinone oxidoreductase that uses light energy to abstract electrons from H(2)O, generating O(2) and a proton gradient subsequently used for ATP formation. It consists of a core antenna complex that captures photons, and an electron transfer chain that converts photonic excitation into a charge separation. This is Photosystem II reaction center protein K from Sinapis alba (White mustard).